The sequence spans 537 residues: Phenylalanine--tRNA ligase beta subunit (537 aa).

One can recognise a B5 domain in the interval 268–343 (FNFRPYRLNL…KSYGIENVRE (76 aa)). Residues Asp-321, Asp-327, Glu-330, and Asp-331 each coordinate Mg(2+).

Belongs to the phenylalanyl-tRNA synthetase beta subunit family. Type 2 subfamily. Tetramer of two alpha and two beta subunits. Mg(2+) serves as cofactor.

Its subcellular location is the cytoplasm. It catalyses the reaction tRNA(Phe) + L-phenylalanine + ATP = L-phenylalanyl-tRNA(Phe) + AMP + diphosphate + H(+). The polypeptide is Phenylalanine--tRNA ligase beta subunit (Thermoplasma volcanium (strain ATCC 51530 / DSM 4299 / JCM 9571 / NBRC 15438 / GSS1)).